The following is a 440-amino-acid chain: Xaa-Pro dipeptidase (440 aa).

Residues aspartate 244, aspartate 255, histidine 335, glutamate 380, and glutamate 419 each coordinate Mn(2+).

It belongs to the peptidase M24B family. Bacterial-type prolidase subfamily. It depends on Mn(2+) as a cofactor.

It catalyses the reaction Xaa-L-Pro dipeptide + H2O = an L-alpha-amino acid + L-proline. Its function is as follows. Splits dipeptides with a prolyl residue in the C-terminal position. This chain is Xaa-Pro dipeptidase, found in Shewanella pealeana (strain ATCC 700345 / ANG-SQ1).